The chain runs to 68 residues: Probable tautomerase Cj0270 (68 aa).

The active-site Proton acceptor; via imino nitrogen is P2.

Belongs to the 4-oxalocrotonate tautomerase family.

This Campylobacter jejuni subsp. jejuni serotype O:2 (strain ATCC 700819 / NCTC 11168) protein is Probable tautomerase Cj0270.